Here is a 275-residue protein sequence, read N- to C-terminus: Small ribosomal subunit protein uS2 (275 aa).

The disordered stretch occupies residues 226 to 275; it reads AAAPNSASVREEEFSAEAGDEGKGRRAPAKKATEKKADAPAAAPEAPAAE. Positions 264–275 are enriched in low complexity; the sequence is APAAAPEAPAAE.

The protein belongs to the universal ribosomal protein uS2 family.

This chain is Small ribosomal subunit protein uS2, found in Xanthomonas campestris pv. campestris (strain ATCC 33913 / DSM 3586 / NCPPB 528 / LMG 568 / P 25).